The primary structure comprises 156 residues: D-aminoacyl-tRNA deacylase (156 aa).

A Gly-cisPro motif, important for rejection of L-amino acids motif is present at residues 142 to 143 (GP).

The protein belongs to the DTD family. As to quaternary structure, homodimer.

It localises to the cytoplasm. It carries out the reaction glycyl-tRNA(Ala) + H2O = tRNA(Ala) + glycine + H(+). It catalyses the reaction a D-aminoacyl-tRNA + H2O = a tRNA + a D-alpha-amino acid + H(+). Its function is as follows. An aminoacyl-tRNA editing enzyme that deacylates mischarged D-aminoacyl-tRNAs. Also deacylates mischarged glycyl-tRNA(Ala), protecting cells against glycine mischarging by AlaRS. Acts via tRNA-based rather than protein-based catalysis; rejects L-amino acids rather than detecting D-amino acids in the active site. By recycling D-aminoacyl-tRNA to D-amino acids and free tRNA molecules, this enzyme counteracts the toxicity associated with the formation of D-aminoacyl-tRNA entities in vivo and helps enforce protein L-homochirality. The polypeptide is D-aminoacyl-tRNA deacylase (Delftia acidovorans (strain DSM 14801 / SPH-1)).